Reading from the N-terminus, the 562-residue chain is NAD-dependent malic enzyme (562 aa).

Tyrosine 101 (proton donor) is an active-site residue. Position 154 (arginine 154) interacts with NAD(+). Lysine 172 functions as the Proton acceptor in the catalytic mechanism. Positions 243, 244, and 267 each coordinate a divalent metal cation. 2 residues coordinate NAD(+): aspartate 267 and asparagine 415.

This sequence belongs to the malic enzymes family. In terms of assembly, homotetramer. Mg(2+) is required as a cofactor. It depends on Mn(2+) as a cofactor.

The enzyme catalyses (S)-malate + NAD(+) = pyruvate + CO2 + NADH. The catalysed reaction is oxaloacetate + H(+) = pyruvate + CO2. The sequence is that of NAD-dependent malic enzyme from Vibrio campbellii (strain ATCC BAA-1116).